The primary structure comprises 230 residues: Ribonuclease 3 (230 aa).

Residues 5 to 125 (YSRFYNILGY…VIGAIYLDSD (121 aa)) form the RNase III domain. Mg(2+) is bound at residue E40. D44 is a catalytic residue. D111 and E114 together coordinate Mg(2+). Residue E114 is part of the active site. The DRBM domain maps to 153–223 (DSKSKLQEIL…AEKMIEMLSQ (71 aa)).

This sequence belongs to the ribonuclease III family. Homodimer. It depends on Mg(2+) as a cofactor.

It is found in the cytoplasm. The enzyme catalyses Endonucleolytic cleavage to 5'-phosphomonoester.. Digests double-stranded RNA. Involved in the processing of primary rRNA transcript to yield the immediate precursors to the large and small rRNAs (23S and 16S). Also processes some mRNAs, and tRNAs when they are encoded in the rRNA operon. In terms of biological role, CRISPR (clustered regularly interspaced short palindromic repeat) is an adaptive immune system that provides protection against mobile genetic elements (viruses, transposable elements and conjugative plasmids). CRISPR clusters contain spacers, sequences complementary to antecedent mobile elements, and target invading nucleic acids. CRISPR clusters are transcribed and processed into CRISPR RNA (crRNA). In this organism endogenous ribonuclease 3 and Cas9 are required for correct coprocessing of pre-crRNA and the trans-encoded small RNA (tracrRNA). Cas9, crRNA and tracrRNA are required for cleavage of invading DNA. Complements pre-crRNA and tracrRNA coprocessing defects in an rnc deletion in S.pyogenes strain 370. The chain is Ribonuclease 3 from Francisella tularensis subsp. novicida (strain U112).